We begin with the raw amino-acid sequence, 154 residues long: Superoxide dismutase [Cu-Zn] (154 aa).

The Cu cation site is built by H47, H49, and H64. An intrachain disulfide couples C58 to C147. Zn(2+)-binding residues include H64, H72, H81, and D84. H121 lines the Cu cation pocket. The span at 124 to 137 (TDDLGKGENEESKK) shows a compositional bias: basic and acidic residues. Residues 124–144 (TDDLGKGENEESKKTGNAGTR) form a disordered region. Substrate is bound at residue R144.

The protein belongs to the Cu-Zn superoxide dismutase family. Homodimer. The cofactor is Cu cation. It depends on Zn(2+) as a cofactor.

It is found in the cytoplasm. The catalysed reaction is 2 superoxide + 2 H(+) = H2O2 + O2. Its function is as follows. Destroys radicals which are normally produced within the cells and which are toxic to biological systems. The polypeptide is Superoxide dismutase [Cu-Zn] (sod1) (Botryotinia fuckeliana (Noble rot fungus)).